The primary structure comprises 239 residues: Protein TrbH (239 aa).

Residues 208-228 (TVVSIICLLMWICLVYIHCGI) traverse the membrane as a helical segment.

It localises to the cell inner membrane. This chain is Protein TrbH (trbH), found in Escherichia coli (strain K12).